The following is a 257-amino-acid chain: Putative hydro-lyase Bcep18194_B2576 (257 aa).

Belongs to the D-glutamate cyclase family.

The sequence is that of Putative hydro-lyase Bcep18194_B2576 from Burkholderia lata (strain ATCC 17760 / DSM 23089 / LMG 22485 / NCIMB 9086 / R18194 / 383).